Here is a 364-residue protein sequence, read N- to C-terminus: MDGSVASSSVWDTQKVYKHHEQQNVAQTRPKYREGRRLKAVKVYTINLESRYLLVQGVPAIGVMAELVQLFALYGVIEEYRPLDEYPAEQFTEVYLIQFQKLTSARAAKRHTDEKSFFGGQLHVCYAPEYETVEETKQKLQDRRRYVNWASQNAAKLHSQQAEVNTESSSSTDTRTAEAPIMQKNPEEARRENVNSDYMGFPLLPLPPTADISYRLQNHFTQPSQLQWTKETTEDKMGSLHNFIPPVQKTSTQSESSSSSGVKEGDLRQKQKISTPSIRFMPRTTHLESRKRKLDEQTFFLKEADKTGVLIGPKLPELPKLDMEDSSLNVTANLIRNTMTKAASVPEAKPVQAKHTTPKPRRRI.

An RRM domain is found at 51–129 (RYLLVQGVPA…GQLHVCYAPE (79 aa)). Over residues 157 to 174 (LHSQQAEVNTESSSSTDT) the composition is skewed to polar residues. Disordered regions lie at residues 157–191 (LHSQQAEVNTESSSSTDTRTAEAPIMQKNPEEARR), 239–291 (SLHN…ESRK), and 343–364 (ASVPEAKPVQAKHTTPKPRRRI). Residues 247–262 (VQKTSTQSESSSSSGV) show a composition bias toward low complexity.

It belongs to the RBM48 family. As to quaternary structure, component of the minor spliceosome, which splices U12-type introns.

Its function is as follows. As a component of the minor spliceosome, involved in the splicing of U12-type introns in pre-mRNAs. The protein is RNA-binding protein 48 (rbm48) of Danio rerio (Zebrafish).